We begin with the raw amino-acid sequence, 727 residues long: NADH-ubiquinone oxidoreductase 75 kDa subunit, mitochondrial (727 aa).

The N-terminal 23 residues, 1–23 (MLRIPIKRALIGLSNSPKGYVRT), are a transit peptide targeting the mitochondrion. The 2Fe-2S ferredoxin-type domain occupies 30–108 (NLIEVFVDGQ…GWNILTNSEK (79 aa)). Cysteine 64, cysteine 75, and cysteine 78 together coordinate [2Fe-2S] cluster. Lysine 84 is subject to N6-acetyllysine. Cysteine 92 lines the [2Fe-2S] cluster pocket. One can recognise a 4Fe-4S His(Cys)3-ligated-type domain in the interval 108 to 147 (KSKKAREGVMEFLLANHPLDCPICDQGGECDLQDQSMMFG). Residues histidine 124, cysteine 128, cysteine 131, cysteine 137, cysteine 176, cysteine 179, cysteine 182, and cysteine 226 each coordinate [4Fe-4S] cluster. Residues 245-301 (TRKTESIDVMDAVGSNIVVSTRTGEVMRILPRMHEDINEEWISDKTRFAYDGLKRQR) form the 4Fe-4S Mo/W bis-MGD-type domain. Serine 461 is subject to Phosphoserine. Lysine 467, lysine 499, and lysine 709 each carry N6-acetyllysine.

It belongs to the complex I 75 kDa subunit family. Core subunit of respiratory chain NADH dehydrogenase (Complex I) which is composed of 45 different subunits. This is the largest subunit of complex I and it is a component of the iron-sulfur (IP) fragment of the enzyme. Complex I associates with ubiquinol-cytochrome reductase complex (Complex III) to form supercomplexes. In astrocytes, less complex I is assembled into supercomplexes as compared to neurons. Interacts with MDM2. Interacts with AKAP1. It depends on [2Fe-2S] cluster as a cofactor. [4Fe-4S] cluster is required as a cofactor. Post-translationally, acetylation of Lys-84 is observed in liver mitochondria from fasted mice but not from fed mice. Brain. More abundant in neurons than in astrocytes (at protein level).

It localises to the mitochondrion inner membrane. It carries out the reaction a ubiquinone + NADH + 5 H(+)(in) = a ubiquinol + NAD(+) + 4 H(+)(out). Core subunit of the mitochondrial membrane respiratory chain NADH dehydrogenase (Complex I) which catalyzes electron transfer from NADH through the respiratory chain, using ubiquinone as an electron acceptor. Essential for catalysing the entry and efficient transfer of electrons within complex I. Plays a key role in the assembly and stability of complex I and participates in the association of complex I with ubiquinol-cytochrome reductase complex (Complex III) to form supercomplexes. This chain is NADH-ubiquinone oxidoreductase 75 kDa subunit, mitochondrial (Ndufs1), found in Mus musculus (Mouse).